Here is a 125-residue protein sequence, read N- to C-terminus: Glycine cleavage system H protein (125 aa).

Residues 23 to 105 (VSTVGITEHA…FEGGWLFKVR (83 aa)) form the Lipoyl-binding domain. Lysine 64 carries the N6-lipoyllysine modification.

It belongs to the GcvH family. In terms of assembly, the glycine cleavage system is composed of four proteins: P, T, L and H. It depends on (R)-lipoate as a cofactor.

Functionally, the glycine cleavage system catalyzes the degradation of glycine. The H protein shuttles the methylamine group of glycine from the P protein to the T protein. This Streptomyces avermitilis (strain ATCC 31267 / DSM 46492 / JCM 5070 / NBRC 14893 / NCIMB 12804 / NRRL 8165 / MA-4680) protein is Glycine cleavage system H protein.